Consider the following 699-residue polypeptide: LMBR1 domain-containing protein 2 homolog (699 aa).

Topologically, residues 1 to 3 (MAY) are extracellular. A helical membrane pass occupies residues 4 to 26 (LLTFGIIAALCLASISLYRYGNI). The Cytoplasmic portion of the chain corresponds to 27–30 (PRQH). A helical transmembrane segment spans residues 31–51 (ILVTLSVLTAWCFSFLIVFTI). The Extracellular segment spans residues 52-106 (PLDVTSTLYRQCLAEHKLALDAAGNASTTANITPPPECQEPWGMVPESVFPNLWR). N-linked (GlcNAc...) asparagine glycosylation occurs at Asn-76. A helical membrane pass occupies residues 107 to 127 (IIYWSSQFLTWLIMPLMQSYL). Topologically, residues 128 to 144 (KAGDFTIKGKLKSALIE) are cytoplasmic. A helical membrane pass occupies residues 145 to 165 (NAIYYGSYLFICGVLLIYIAV). The Extracellular segment spans residues 166 to 181 (KGVPLDWQKLKAIASS). The helical transmembrane segment at 182–202 (ASNTWGLFLLILLLGYALVEV) threads the bilayer. The Cytoplasmic segment spans residues 203 to 381 (PRSLWNNAKP…ECLLKAPFLK (179 aa)). Residues 382–402 (TLCVVTATMSAMVVWSEVTFF) traverse the membrane as a helical segment. Topologically, residues 403 to 426 (SRDPVLSIFANVIYLAKESYDFFT) are extracellular. A helical transmembrane segment spans residues 427-447 (IEVFSMMVLCYFFYCTYSTIL). Topologically, residues 448 to 467 (RIRFLNLYYLAPHHQTNEHS) are cytoplasmic. A helical membrane pass occupies residues 468 to 488 (LIFSGMLLCRLTPPMCLNFLG). Residues 489–514 (LIHMDSHIIPERMMETYYTRIMGHMD) are Extracellular-facing. Residues 515-535 (VIGIISNGFNIYFPMCMLAFC) form a helical membrane-spanning segment. The Cytoplasmic segment spans residues 536–699 (LSTWFSLGSR…PPPRGLFDDV (164 aa)). Residues 564 to 592 (ELVQEGKDLIAREKRRRQRAEEAMARRRD) adopt a coiled-coil conformation. The interval 669–699 (FRGTSELDPDYEAENERRIVGPPPRGLFDDV) is disordered.

It belongs to the LIMR family.

The protein resides in the membrane. This chain is LMBR1 domain-containing protein 2 homolog, found in Drosophila pseudoobscura pseudoobscura (Fruit fly).